We begin with the raw amino-acid sequence, 366 residues long: Aminomethyltransferase (366 aa).

It belongs to the GcvT family. The glycine cleavage system is composed of four proteins: P, T, L and H.

The enzyme catalyses N(6)-[(R)-S(8)-aminomethyldihydrolipoyl]-L-lysyl-[protein] + (6S)-5,6,7,8-tetrahydrofolate = N(6)-[(R)-dihydrolipoyl]-L-lysyl-[protein] + (6R)-5,10-methylene-5,6,7,8-tetrahydrofolate + NH4(+). In terms of biological role, the glycine cleavage system catalyzes the degradation of glycine. The chain is Aminomethyltransferase from Bacillus velezensis (strain DSM 23117 / BGSC 10A6 / LMG 26770 / FZB42) (Bacillus amyloliquefaciens subsp. plantarum).